Reading from the N-terminus, the 333-residue chain is Ribosomal RNA small subunit methyltransferase C (333 aa).

It belongs to the methyltransferase superfamily. RsmC family. Monomer.

Its subcellular location is the cytoplasm. It carries out the reaction guanosine(1207) in 16S rRNA + S-adenosyl-L-methionine = N(2)-methylguanosine(1207) in 16S rRNA + S-adenosyl-L-homocysteine + H(+). Its function is as follows. Specifically methylates the guanine in position 1207 of 16S rRNA in the 30S particle. In Chromohalobacter salexigens (strain ATCC BAA-138 / DSM 3043 / CIP 106854 / NCIMB 13768 / 1H11), this protein is Ribosomal RNA small subunit methyltransferase C.